The sequence spans 102 residues: Large ribosomal subunit protein uL24 (102 aa).

The disordered stretch occupies residues M1 to V22.

Belongs to the universal ribosomal protein uL24 family. In terms of assembly, part of the 50S ribosomal subunit.

One of two assembly initiator proteins, it binds directly to the 5'-end of the 23S rRNA, where it nucleates assembly of the 50S subunit. Functionally, one of the proteins that surrounds the polypeptide exit tunnel on the outside of the subunit. This is Large ribosomal subunit protein uL24 from Exiguobacterium sp. (strain ATCC BAA-1283 / AT1b).